Consider the following 208-residue polypeptide: MEAPPVTMMPVTGGTINMMEYLLQGSVLDHSLESLIHRLRGLCDNMEPETFVDHEMVFLLKGQQASPFVLRARRSLDRAGAPWHLRYLGQPEMGDKNRHALVRNCVDIATSENLTDFLMEMGFRMDHEFVARGHLFRKGIMKIVVYKIFRILVPGNTDNTEALSLSYLVELSVVAPAGQDMVSDDMRNFAEQLKPLVHLEKIDPKRLM.

Position 66 is a phosphoserine (Ser66).

Belongs to the Mediator complex subunit 18 family. As to quaternary structure, component of the Mediator complex, which is composed of MED1, MED4, MED6, MED7, MED8, MED9, MED10, MED11, MED12, MED13, MED13L, MED14, MED15, MED16, MED17, MED18, MED19, MED20, MED21, MED22, MED23, MED24, MED25, MED26, MED27, MED29, MED30, MED31, CCNC, CDK8 and CDC2L6/CDK11. The MED12, MED13, CCNC and CDK8 subunits form a distinct module termed the CDK8 module. Mediator containing the CDK8 module is less active than Mediator lacking this module in supporting transcriptional activation. Individual preparations of the Mediator complex lacking one or more distinct subunits have been variously termed ARC, CRSP, DRIP, PC2, SMCC and TRAP.

It localises to the nucleus. Its function is as follows. Component of the Mediator complex, a coactivator involved in the regulated transcription of nearly all RNA polymerase II-dependent genes. Mediator functions as a bridge to convey information from gene-specific regulatory proteins to the basal RNA polymerase II transcription machinery. Mediator is recruited to promoters by direct interactions with regulatory proteins and serves as a scaffold for the assembly of a functional preinitiation complex with RNA polymerase II and the general transcription factors. In Bos taurus (Bovine), this protein is Mediator of RNA polymerase II transcription subunit 18 (MED18).